The sequence spans 271 residues: Solute carrier family 66 member 2 (271 aa).

Helical transmembrane passes span glycine 7–phenylalanine 27, phenylalanine 49–phenylalanine 69, and histidine 72–leucine 92. In terms of domain architecture, PQ-loop 1 spans histidine 14–glutamine 80. Serine 110 is modified (phosphoserine). The next 3 helical transmembrane spans lie at phenylalanine 143–leucine 163, alanine 168–proline 188, and valine 232–alanine 252. The PQ-loop 2 domain maps to cysteine 149–threonine 215.

Its subcellular location is the membrane. The sequence is that of Solute carrier family 66 member 2 (Slc66a2) from Rattus norvegicus (Rat).